The sequence spans 277 residues: MALKTFNPTTPGQRQLVMVDRSALYKGKPVKALTEGKHSSGGRNNTGRITVRFRGGGHKQTLRIVDFKRDKVDAPATVERLEYDPNRTAFIALVKYEDGTQAYILAPQRLAVGDSVVAGNYVDVKPGNVMPLGNMPVGTIIHNIEVKIGKGGQLARSAGTYAQLVGRDQDYVIIRLNSGEQRLVHGRCRGTIGAVSNPDHMNTSIGKAGRNRWLGRKPHNRGVSMNPIDHPHGGGEGRTSGGRHPVTPWGKPTKGKKTRSNKSTNKFILLSRHKRKK.

The segment at 199–277 (DHMNTSIGKA…ILLSRHKRKK (79 aa)) is disordered. Residues 209-220 (GRNRWLGRKPHN) show a composition bias toward basic residues.

This sequence belongs to the universal ribosomal protein uL2 family. Part of the 50S ribosomal subunit. Forms a bridge to the 30S subunit in the 70S ribosome.

Its function is as follows. One of the primary rRNA binding proteins. Required for association of the 30S and 50S subunits to form the 70S ribosome, for tRNA binding and peptide bond formation. It has been suggested to have peptidyltransferase activity; this is somewhat controversial. Makes several contacts with the 16S rRNA in the 70S ribosome. The sequence is that of Large ribosomal subunit protein uL2 from Bradyrhizobium diazoefficiens (strain JCM 10833 / BCRC 13528 / IAM 13628 / NBRC 14792 / USDA 110).